The following is a 333-amino-acid chain: L-lactate dehydrogenase A chain (333 aa).

Residues 30 to 58 and R100 contribute to the NAD(+) site; that span reads GMVG…MEDK. Substrate contacts are provided by R107, N139, and R170. N139 provides a ligand contact to NAD(+). H194 acts as the Proton acceptor in catalysis. Substrate is bound at residue T249.

Belongs to the LDH/MDH superfamily. LDH family. In terms of assembly, homotetramer.

The protein resides in the cytoplasm. It carries out the reaction (S)-lactate + NAD(+) = pyruvate + NADH + H(+). It functions in the pathway fermentation; pyruvate fermentation to lactate; (S)-lactate from pyruvate: step 1/1. The sequence is that of L-lactate dehydrogenase A chain (ldha) from Cyprinus carpio (Common carp).